The chain runs to 359 residues: Ferredoxin--NADP reductase (359 aa).

Positions 48, 56, 61, 101, 139, 304, and 345 each coordinate FAD. A disordered region spans residues 340–359 (VHTHTSNDTNLQSRLHAAAE). Residues 341–352 (HTHTSNDTNLQS) show a composition bias toward polar residues.

The protein belongs to the ferredoxin--NADP reductase type 2 family. In terms of assembly, homodimer. FAD serves as cofactor.

It catalyses the reaction 2 reduced [2Fe-2S]-[ferredoxin] + NADP(+) + H(+) = 2 oxidized [2Fe-2S]-[ferredoxin] + NADPH. This is Ferredoxin--NADP reductase from Ralstonia nicotianae (strain ATCC BAA-1114 / GMI1000) (Ralstonia solanacearum).